The chain runs to 148 residues: Lysozyme C, non-stomach isozyme (148 aa).

An N-terminal signal peptide occupies residues 1–18 (MKALLILGLLLFSVAVQG). The 130-residue stretch at 19–148 (KVFERCELAR…LTSYIQGCGV (130 aa)) folds into the C-type lysozyme domain. Cystine bridges form between Cys24/Cys146, Cys48/Cys134, Cys83/Cys99, and Cys95/Cys113. Residues Glu53 and Asp71 contribute to the active site.

It belongs to the glycosyl hydrolase 22 family. As to expression, expressed in blood cells.

The catalysed reaction is Hydrolysis of (1-&gt;4)-beta-linkages between N-acetylmuramic acid and N-acetyl-D-glucosamine residues in a peptidoglycan and between N-acetyl-D-glucosamine residues in chitodextrins.. Functionally, lysozymes have primarily a bacteriolytic function; those in tissues and body fluids are associated with the monocyte-macrophage system and enhance the activity of immunoagents. This is Lysozyme C, non-stomach isozyme (LYS) from Bos taurus (Bovine).